A 247-amino-acid polypeptide reads, in one-letter code: DNA repair protein RecO (247 aa).

This sequence belongs to the RecO family.

Functionally, involved in DNA repair and RecF pathway recombination. The polypeptide is DNA repair protein RecO (Alkalilimnicola ehrlichii (strain ATCC BAA-1101 / DSM 17681 / MLHE-1)).